The following is a 96-amino-acid chain: Small ribosomal subunit protein bS6 (96 aa).

It belongs to the bacterial ribosomal protein bS6 family.

Its function is as follows. Binds together with bS18 to 16S ribosomal RNA. This is Small ribosomal subunit protein bS6 from Corynebacterium aurimucosum (strain ATCC 700975 / DSM 44827 / CIP 107346 / CN-1) (Corynebacterium nigricans).